A 181-amino-acid chain; its full sequence is Shikimate kinase 2 (181 aa).

12–17 (GCGKTT) is a binding site for ATP. The Mg(2+) site is built by threonine 16 and aspartate 32. Positions 34, 58, and 79 each coordinate substrate. Residues 112–126 (EAEPEADLRPTLTGK) are LID domain. Position 120 (arginine 120) interacts with ATP. Arginine 139 contributes to the substrate binding site.

It belongs to the shikimate kinase family. AroL subfamily. In terms of assembly, monomer. It depends on Mg(2+) as a cofactor.

The protein localises to the cytoplasm. The catalysed reaction is shikimate + ATP = 3-phosphoshikimate + ADP + H(+). It functions in the pathway metabolic intermediate biosynthesis; chorismate biosynthesis; chorismate from D-erythrose 4-phosphate and phosphoenolpyruvate: step 5/7. In terms of biological role, catalyzes the specific phosphorylation of the 3-hydroxyl group of shikimic acid using ATP as a cosubstrate. This Salmonella enteritidis PT4 (strain P125109) protein is Shikimate kinase 2.